A 353-amino-acid polypeptide reads, in one-letter code: Photosystem II D2 protein (353 aa).

An N-acetylthreonine modification is found at threonine 2. Threonine 2 is modified (phosphothreonine). Residues 41–61 traverse the membrane as a helical segment; that stretch reads CAYFALGGWFTGTTFVTSWYT. Position 118 (histidine 118) interacts with chlorophyll a. The chain crosses the membrane as a helical span at residues 125-141; the sequence is GFMLRQFELARSVQLRP. Residues glutamine 130 and asparagine 143 each coordinate pheophytin a. The helical transmembrane segment at 153–166 threads the bilayer; sequence VFVSVFLIYPLGQS. Position 198 (histidine 198) interacts with chlorophyll a. The chain crosses the membrane as a helical span at residues 208-228; it reads AALLCAIHGATVENTLFEDGD. Residues histidine 215 and phenylalanine 262 each contribute to the a plastoquinone site. Histidine 215 serves as a coordination point for Fe cation. Residue histidine 269 coordinates Fe cation. The chain crosses the membrane as a helical span at residues 279–295; that stretch reads GLWMSALGVVGLALNLR.

It belongs to the reaction center PufL/M/PsbA/D family. As to quaternary structure, PSII is composed of 1 copy each of membrane proteins PsbA, PsbB, PsbC, PsbD, PsbE, PsbF, PsbH, PsbI, PsbJ, PsbK, PsbL, PsbM, PsbT, PsbX, PsbY, PsbZ, Psb30/Ycf12, at least 3 peripheral proteins of the oxygen-evolving complex and a large number of cofactors. It forms dimeric complexes. Interacts with PAM68. Requires The D1/D2 heterodimer binds P680, chlorophylls that are the primary electron donor of PSII, and subsequent electron acceptors. It shares a non-heme iron and each subunit binds pheophytin, quinone, additional chlorophylls, carotenoids and lipids. There is also a Cl(-1) ion associated with D1 and D2, which is required for oxygen evolution. The PSII complex binds additional chlorophylls, carotenoids and specific lipids. as cofactor. Post-translationally, phosphorylation occurs in normal plant growth light conditions. Rapid dephosphorylation occurs during heat shock.

The protein localises to the plastid. The protein resides in the chloroplast thylakoid membrane. The enzyme catalyses 2 a plastoquinone + 4 hnu + 2 H2O = 2 a plastoquinol + O2. Functionally, photosystem II (PSII) is a light-driven water:plastoquinone oxidoreductase that uses light energy to abstract electrons from H(2)O, generating O(2) and a proton gradient subsequently used for ATP formation. It consists of a core antenna complex that captures photons, and an electron transfer chain that converts photonic excitation into a charge separation. The D1/D2 (PsbA/PsbD) reaction center heterodimer binds P680, the primary electron donor of PSII as well as several subsequent electron acceptors. D2 is needed for assembly of a stable PSII complex. In Arabidopsis thaliana (Mouse-ear cress), this protein is Photosystem II D2 protein.